A 416-amino-acid chain; its full sequence is Putative nucleoside permease NupX (416 aa).

Residues 1–2 (MD) lie on the Periplasmic side of the membrane. The helical transmembrane segment at 3-23 (VMRSVLGMVVLLTIAFLLSVN) threads the bilayer. Topologically, residues 24–31 (KKKISLRT) are cytoplasmic. A helical membrane pass occupies residues 32 to 52 (VGAALVLQVVIGGIMLWLPPG). The Periplasmic portion of the chain corresponds to 53–95 (RWVAEKVAFGVHKVMAYSDAGSAFIFGSLVGPKMDTLFDGAGF). Residues 96–118 (IFGFRVLPAIIFVTALVSILYYI) form a helical membrane-spanning segment. The Cytoplasmic portion of the chain corresponds to 119-172 (GVMGILIRILGGIFQKALNISKIESFVAVTTIFLGQNEIPAIVKPFIDRLNRNE). A helical transmembrane segment spans residues 173-193 (LFTAICSGMASIAGSTMIGYA). Topologically, residues 194 to 196 (ALG) are periplasmic. The helical transmembrane segment at 197-217 (VPVEYLLAASLMAIPGGILFA) threads the bilayer. Topologically, residues 218–246 (RLLSPATESSQVSFNNLSFTETPPKSIIE) are cytoplasmic. Residues 247 to 267 (AAATGAMTGLKIAAGVATVVM) form a helical membrane-spanning segment. Residues 268–352 (AFVAIIALIN…QTAGTLDAKT (85 aa)) are Periplasmic-facing. Residues 353-373 (VAIISFALCGFANFGSIGVVV) traverse the membrane as a helical segment. Residues 374-394 (GAFSAVAPHRAPEIAQLGLRA) are Cytoplasmic-facing. A helical membrane pass occupies residues 395 to 415 (LAAATLSNLMSATIAGFFIGL). Residue alanine 416 is a topological domain, periplasmic.

Belongs to the concentrative nucleoside transporter (CNT) (TC 2.A.41) family.

Its subcellular location is the cell inner membrane. The polypeptide is Putative nucleoside permease NupX (nupX) (Escherichia coli (strain K12)).